The primary structure comprises 235 residues: Centromere protein H (235 aa).

A disordered region spans residues 1–23; it reads MAGRLSESVGSGPGAEAETAADP. Residues 125–145 adopt a coiled-coil conformation; it reads EIIQAHQQARVIRENLNDIRR.

This sequence belongs to the CENP-H/MCM16 family. Component of the CENPA-HI complex, at least composed of CENPH, CENPI, CENPK, CENPL, CENPM, CENPO and CENPP. Interacts with NDC80.

The protein localises to the nucleus. It is found in the chromosome. The protein resides in the centromere. It localises to the kinetochore. Functionally, component of the CENPA-HI complex, a centromeric complex involved in assembly of kinetochore proteins, mitotic progression and chromosome segregation. Required for the localization of CENPC but not CENPA to the centromere. It however may be involved in incorporation of newly synthesized CENPA into centromeres via its interaction with the CENPA-NAC complex. The polypeptide is Centromere protein H (CENPH) (Gallus gallus (Chicken)).